A 449-amino-acid chain; its full sequence is Phosphomethylpyrimidine synthase (449 aa).

Residues Asn80, Met109, Tyr138, His173, 193 to 195 (SRG), 234 to 237 (DSLR), and Glu273 each bind substrate. Position 277 (His277) interacts with Zn(2+). Tyr300 provides a ligand contact to substrate. Residue His341 participates in Zn(2+) binding. [4Fe-4S] cluster is bound by residues Cys421, Cys424, and Cys429.

Belongs to the ThiC family. Homodimer. It depends on [4Fe-4S] cluster as a cofactor.

It catalyses the reaction 5-amino-1-(5-phospho-beta-D-ribosyl)imidazole + S-adenosyl-L-methionine = 4-amino-2-methyl-5-(phosphooxymethyl)pyrimidine + CO + 5'-deoxyadenosine + formate + L-methionine + 3 H(+). The protein operates within cofactor biosynthesis; thiamine diphosphate biosynthesis. Functionally, catalyzes the synthesis of the hydroxymethylpyrimidine phosphate (HMP-P) moiety of thiamine from aminoimidazole ribotide (AIR) in a radical S-adenosyl-L-methionine (SAM)-dependent reaction. The chain is Phosphomethylpyrimidine synthase from Campylobacter hominis (strain ATCC BAA-381 / DSM 21671 / CCUG 45161 / LMG 19568 / NCTC 13146 / CH001A).